We begin with the raw amino-acid sequence, 95 residues long: Cell division protein FtsB (95 aa).

The Cytoplasmic portion of the chain corresponds to 1 to 3; it reads MKW. A helical transmembrane segment spans residues 4–21; the sequence is VTGLLVVLLLGLQYKLWI. Residues 22 to 95 lie on the Periplasmic side of the membrane; sequence GEGSVAEVWQ…QVVGRPGETP (74 aa). The stretch at 26–73 forms a coiled coil; that stretch reads VAEVWQLRQTLEAQRAENEELRYRNAALDAEVTDLKTGLDAIEERARR.

Belongs to the FtsB family. As to quaternary structure, part of a complex composed of FtsB, FtsL and FtsQ.

It is found in the cell inner membrane. Functionally, essential cell division protein. May link together the upstream cell division proteins, which are predominantly cytoplasmic, with the downstream cell division proteins, which are predominantly periplasmic. The sequence is that of Cell division protein FtsB from Thioalkalivibrio sulfidiphilus (strain HL-EbGR7).